Reading from the N-terminus, the 421-residue chain is C2H2 type master regulator of conidiophore development brlA (421 aa).

2 consecutive C2H2-type zinc fingers follow at residues 309-333 and 339-364; these read FKCK…MKSH and HVCW…TKTH. Residues 379–421 form a disordered region; sequence ESSPDYDPDFRGQLTPDGLPIRGSTLDDPMPNSREYSVDGLDD.

The protein localises to the nucleus. Functionally, brlA, abaA and wetA are pivotal regulators of conidiophore development and conidium maturation. They act individually and together to regulate their own expression and that of numerous other sporulation-specific genes. Binds promoters of target genes at brlA response elements (BREs) containing the conserved sequence 5'-(C/A)(A/G)AGGG(G/A)-3'. Required for conidiophores formation. Controls expression of abaA. The chain is C2H2 type master regulator of conidiophore development brlA from Aspergillus oryzae (strain ATCC 42149 / RIB 40) (Yellow koji mold).